Reading from the N-terminus, the 212-residue chain is Thymidylate kinase (212 aa).

13 to 20 (GLEGAGKS) is a binding site for ATP.

It belongs to the thymidylate kinase family.

The catalysed reaction is dTMP + ATP = dTDP + ADP. Its function is as follows. Phosphorylation of dTMP to form dTDP in both de novo and salvage pathways of dTTP synthesis. This Legionella pneumophila (strain Corby) protein is Thymidylate kinase.